Reading from the N-terminus, the 432-residue chain is Putative D-alanyl-D-alanine carboxypeptidase (432 aa).

A helical; Signal-anchor membrane pass occupies residues 7-25 (ATVLLTFSLSAFAVEYPVL).

This sequence belongs to the peptidase S12 family. YfeW subfamily.

The protein resides in the cell inner membrane. The enzyme catalyses Preferential cleavage: (Ac)2-L-Lys-D-Ala-|-D-Ala. Also transpeptidation of peptidyl-alanyl moieties that are N-acyl substituents of D-alanine.. In Salmonella enteritidis PT4 (strain P125109), this protein is Putative D-alanyl-D-alanine carboxypeptidase.